We begin with the raw amino-acid sequence, 182 residues long: Ribosome-recycling factor (182 aa).

Belongs to the RRF family.

It localises to the cytoplasm. Responsible for the release of ribosomes from messenger RNA at the termination of protein biosynthesis. May increase the efficiency of translation by recycling ribosomes from one round of translation to another. The chain is Ribosome-recycling factor from Synechocystis sp. (strain ATCC 27184 / PCC 6803 / Kazusa).